Here is a 372-residue protein sequence, read N- to C-terminus: Dual-specificity RNA methyltransferase RlmN (372 aa).

Residue E94 is the Proton acceptor of the active site. In terms of domain architecture, Radical SAM core spans 100–339; that stretch reads DGDRATLCVS…VTIRKTRGDD (240 aa). A disulfide bridge links C107 with C344. Residues C114, C118, and C121 each coordinate [4Fe-4S] cluster. S-adenosyl-L-methionine is bound by residues 168–169, S200, 222–224, and N301; these read GE and SLH. Residue C344 is the S-methylcysteine intermediate of the active site.

Belongs to the radical SAM superfamily. RlmN family. It depends on [4Fe-4S] cluster as a cofactor.

The protein localises to the cytoplasm. The catalysed reaction is adenosine(2503) in 23S rRNA + 2 reduced [2Fe-2S]-[ferredoxin] + 2 S-adenosyl-L-methionine = 2-methyladenosine(2503) in 23S rRNA + 5'-deoxyadenosine + L-methionine + 2 oxidized [2Fe-2S]-[ferredoxin] + S-adenosyl-L-homocysteine. The enzyme catalyses adenosine(37) in tRNA + 2 reduced [2Fe-2S]-[ferredoxin] + 2 S-adenosyl-L-methionine = 2-methyladenosine(37) in tRNA + 5'-deoxyadenosine + L-methionine + 2 oxidized [2Fe-2S]-[ferredoxin] + S-adenosyl-L-homocysteine. Specifically methylates position 2 of adenine 2503 in 23S rRNA and position 2 of adenine 37 in tRNAs. m2A2503 modification seems to play a crucial role in the proofreading step occurring at the peptidyl transferase center and thus would serve to optimize ribosomal fidelity. The protein is Dual-specificity RNA methyltransferase RlmN of Aliivibrio fischeri (strain MJ11) (Vibrio fischeri).